The primary structure comprises 162 residues: Photosystem II extrinsic protein V (162 aa).

The N-terminal stretch at 1-26 is a signal peptide; the sequence is MLKRYMLLAVATVFFAFQVLTSTATA. The heme c site is built by cysteine 62, cysteine 65, histidine 66, and histidine 117.

It belongs to the cytochrome c family. PsbV subfamily. In terms of assembly, PSII is composed of 1 copy each of membrane proteins PsbA, PsbB, PsbC, PsbD, PsbE, PsbF, PsbH, PsbI, PsbJ, PsbK, PsbL, PsbM, PsbT, PsbX, PsbY, PsbZ, Psb30/Ycf12, peripheral proteins PsbO, CyanoQ (PsbQ), PsbU, PsbV and a large number of cofactors. It forms dimeric complexes. It depends on heme c as a cofactor.

It localises to the cellular thylakoid membrane. Its function is as follows. One of the extrinsic, lumenal subunits of photosystem II (PSII). PSII is a light-driven water plastoquinone oxidoreductase, using light energy to abstract electrons from H(2)O, generating a proton gradient subsequently used for ATP formation. The extrinsic proteins stabilize the structure of photosystem II oxygen-evolving complex (OEC), the ion environment of oxygen evolution and protect the OEC against heat-induced inactivation. Low-potential cytochrome c that plays a role in the OEC of PSII. This Acaryochloris marina (strain MBIC 11017) protein is Photosystem II extrinsic protein V.